Reading from the N-terminus, the 233-residue chain is Achaete-scute homolog 1 (233 aa).

Disordered stretches follow at residues 1–24 (MESS…FLPP) and 39–95 (AAAA…ELMR). Over residues 39-62 (AAAAAAQSAQQQQQQQAPQQQAPQ) the composition is skewed to low complexity. The segment covering 78 to 87 (SAAKQVKRQR) has biased composition (basic residues). Residues 115-167 (AAVARRNERERNRVKLVNLGFATLREHVPNGAANKKMSKVETLRSAVEYIRAL) form the bHLH domain. N6-acetyllysine is present on lysine 153.

As to quaternary structure, efficient DNA binding requires dimerization with another bHLH protein. Forms a heterodimer with TCF3. As to expression, developing CNS and PNS at embryonic and postnatal stages.

It is found in the nucleus. Functionally, transcription factor that plays a key role in neuronal differentiation: acts as a pioneer transcription factor, accessing closed chromatin to allow other factors to bind and activate neural pathways. Directly binds the E box motif (5'-CANNTG-3') on promoters and promotes transcription of neuronal genes. The combination of three transcription factors, ASCL1, POU3F2/BRN2 and MYT1L, is sufficient to reprogram fibroblasts and other somatic cells into induced neuronal (iN) cells in vitro. Plays a role at early stages of development of specific neural lineages in most regions of the CNS, and of several lineages in the PNS. Essential for the generation of olfactory and autonomic neurons. Acts synergistically with FOXN4 to specify the identity of V2b neurons rather than V2a from bipotential p2 progenitors during spinal cord neurogenesis, probably through DLL4-NOTCH signaling activation. Involved in the regulation of neuroendocrine cell development in the glandular stomach. This is Achaete-scute homolog 1 (Ascl1) from Rattus norvegicus (Rat).